The sequence spans 296 residues: 33 kDa chaperonin (296 aa).

Disulfide bonds link Cys238–Cys240 and Cys271–Cys274.

This sequence belongs to the HSP33 family. Under oxidizing conditions two disulfide bonds are formed involving the reactive cysteines. Under reducing conditions zinc is bound to the reactive cysteines and the protein is inactive.

It localises to the cytoplasm. Its function is as follows. Redox regulated molecular chaperone. Protects both thermally unfolding and oxidatively damaged proteins from irreversible aggregation. Plays an important role in the bacterial defense system toward oxidative stress. This Clostridium botulinum (strain Okra / Type B1) protein is 33 kDa chaperonin.